The primary structure comprises 809 residues: E3 ubiquitin-protein ligase RSP5 (809 aa).

One can recognise a C2 domain in the interval 1 to 105 (MPSSISVKLV…GHLDEDTATS (105 aa)). Disordered regions lie at residues 99 to 122 (DEDT…KKSN), 139 to 240 (PSSS…RRTD), and 257 to 298 (WKRP…DNSS). Basic and acidic residues predominate over residues 108–122 (RPREETITRDLKKSN). The segment covering 139 to 148 (PSSSPHSQAP) has biased composition (polar residues). A compositionally biased stretch (low complexity) spans 149–183 (SGHTASSSTNTSSTTRTNGHSTSSTRNHSTSHPSR). The span at 184–196 (GTAQAVESTLQSG) shows a compositional bias: polar residues. Residues 197–219 (TTAATNTATTSHRSTNSTSSATR) are compositionally biased toward low complexity. WW domains are found at residues 229-262 (GRLP…RPTL), 331-364 (GELP…DPRR), and 387-420 (GPLP…DPRL). A Glycyl lysine isopeptide (Lys-Gly) (interchain with G-Cter in ubiquitin) cross-link involves residue Lys-258. An HECT domain is found at 705–809 (YRGYQESDEV…VEETIGFGQE (105 aa)). The Glycyl thioester intermediate role is filled by Cys-777.

The protein belongs to the RSP5/NEDD4 family. As to quaternary structure, component of the RSP5-BUL1/2 ubiquitin ligase complex composed of at least RSP5 and BUL1 or BUL2. Component of the RSP5-UBA1-UBC5 ubiquitin ligase complex composed of E3 RSP5, E1 UBA1 and E2 UBC5. Also forms a ternary complex with RUP1 and UBP2. Interacts (via WW domains) with LSB1. Interacts (via WW domains) with PIN3/LSB2. Interacts (via WW domains) with RCR1 (via PY motifs). Interacts with UBP2; the interaction is direct. Interacts with HSE1. Interacts with LAS17. Interacts with ROG3. Interacts with ROD1. Interacts with RVS167. Interacts with ubiquitin. In terms of processing, the ubiquitination appears to be the result of an intramolecular transfer of ubiquitin.

Its subcellular location is the cytoplasm. It is found in the nucleus. The protein resides in the cytoskeleton. It localises to the actin patch. The catalysed reaction is S-ubiquitinyl-[E2 ubiquitin-conjugating enzyme]-L-cysteine + [acceptor protein]-L-lysine = [E2 ubiquitin-conjugating enzyme]-L-cysteine + N(6)-ubiquitinyl-[acceptor protein]-L-lysine.. It participates in protein modification; protein ubiquitination. In terms of biological role, E3 ubiquitin-protein ligase which accepts ubiquitin from an E2 ubiquitin-conjugating enzyme in the form of a thioester and then directly transfers the ubiquitin to targeted substrates. Component of a RSP5 ubiquitin ligase complex which specifies polyubiquitination and intracellular trafficking of the general amino acid permease GAP1 as well as other cell surface proteins like GAP1, FUR4, MAL61, PMA1 and STE2. The RSP5-BUL1/2 complex is also necessary for the heat-shock element (HSE)-mediated gene expression, nitrogen starvation GLN3-dependent transcription, pressure-induced differential regulation of the two tryptophan permeases TAT1 and TAT2 and sorting efficiency into multivesicular bodies. The RSP5-UBA1-UBC5 ubiquitin ligase complex ubiquitinates RPO21 forming 'Lys-63'-linked polyubiquitin chains. Plays a role in tolerance to o-dinitrobenzene. Involved in actin cytoskeleton organization and dynamics. Ubiquitinates the LAS17-binding proteins LSB1 and PIN3/LSB2 without directing them for degradation and affects LAS17 levels in a SLA1-dependent and LSB1/2-independent manner. Also involved in the degradation of non-functional 18S rRNAs in response to stalled ribosomes by mediating polyubiquitination of monoubiquitinated RPS3/uS3: mediates formation of 'Lys-63'-linked polyubiquitin chains on monoubiquitined RPS3/uS3, promoting the degradation of non-functional 18S rRNAs. This Saccharomyces cerevisiae (strain ATCC 204508 / S288c) (Baker's yeast) protein is E3 ubiquitin-protein ligase RSP5 (RSP5).